Reading from the N-terminus, the 195-residue chain is Cysteine/O-acetylserine efflux protein (195 aa).

Transmembrane regions (helical) follow at residues 47–67 (SLGFLIVMLLCAGISFSLAVI), 70–90 (AAVHLLSWAGAAYIVWLAWKI), 105–125 (ISFWASFALQFVNVKIILYGV), 142–162 (VVGVSVLLAMIGTFGNVCWAL), and 177–194 (QLNIVLALLLVYCAVRIF).

It belongs to the Rht family.

The protein localises to the cell inner membrane. The enzyme catalyses O-acetyl-L-serine(in) = O-acetyl-L-serine(out). It carries out the reaction L-cysteine(in) = L-cysteine(out). Exporter of O-acetylserine (OAS) and cysteine. This Shigella boydii serotype 4 (strain Sb227) protein is Cysteine/O-acetylserine efflux protein (eamB).